We begin with the raw amino-acid sequence, 518 residues long: GMP synthase [glutamine-hydrolyzing] (518 aa).

The region spanning Arg6 to Asp200 is the Glutamine amidotransferase type-1 domain. The active-site Nucleophile is Cys84. Catalysis depends on residues His175 and Glu177. In terms of domain architecture, GMPS ATP-PPase spans Trp201–Arg393. An ATP-binding site is contributed by Ser228–Ser234.

As to quaternary structure, homodimer.

It catalyses the reaction XMP + L-glutamine + ATP + H2O = GMP + L-glutamate + AMP + diphosphate + 2 H(+). It functions in the pathway purine metabolism; GMP biosynthesis; GMP from XMP (L-Gln route): step 1/1. Functionally, catalyzes the synthesis of GMP from XMP. The protein is GMP synthase [glutamine-hydrolyzing] of Cereibacter sphaeroides (strain ATCC 17025 / ATH 2.4.3) (Rhodobacter sphaeroides).